We begin with the raw amino-acid sequence, 229 residues long: Glycerol-3-phosphate acyltransferase (229 aa).

6 consecutive transmembrane segments (helical) span residues tryptophan 2–tryptophan 22, leucine 56–isoleucine 76, phenylalanine 93–phenylalanine 113, leucine 129–leucine 149, serine 151–leucine 171, and alanine 178–alanine 198.

It belongs to the PlsY family. Probably interacts with PlsX.

Its subcellular location is the cell inner membrane. The catalysed reaction is an acyl phosphate + sn-glycerol 3-phosphate = a 1-acyl-sn-glycero-3-phosphate + phosphate. It functions in the pathway lipid metabolism; phospholipid metabolism. In terms of biological role, catalyzes the transfer of an acyl group from acyl-phosphate (acyl-PO(4)) to glycerol-3-phosphate (G3P) to form lysophosphatidic acid (LPA). This enzyme utilizes acyl-phosphate as fatty acyl donor, but not acyl-CoA or acyl-ACP. This is Glycerol-3-phosphate acyltransferase from Salinibacter ruber (strain DSM 13855 / M31).